Consider the following 126-residue polypeptide: UPF0102 protein HD_0802 (126 aa).

It belongs to the UPF0102 family.

The polypeptide is UPF0102 protein HD_0802 (Haemophilus ducreyi (strain 35000HP / ATCC 700724)).